A 409-amino-acid polypeptide reads, in one-letter code: LL-diaminopimelate aminotransferase (409 aa).

The substrate site is built by tyrosine 15 and glycine 42. Pyridoxal 5'-phosphate is bound by residues tyrosine 72, 108-109, tyrosine 132, asparagine 186, tyrosine 217, and 245-247; these read AK and SFS. The substrate site is built by lysine 109, tyrosine 132, and asparagine 186. Position 248 is an N6-(pyridoxal phosphate)lysine (lysine 248). Residues arginine 256 and asparagine 291 each contribute to the pyridoxal 5'-phosphate site. Positions 291 and 387 each coordinate substrate.

The protein belongs to the class-I pyridoxal-phosphate-dependent aminotransferase family. LL-diaminopimelate aminotransferase subfamily. In terms of assembly, homodimer. It depends on pyridoxal 5'-phosphate as a cofactor.

It carries out the reaction (2S,6S)-2,6-diaminopimelate + 2-oxoglutarate = (S)-2,3,4,5-tetrahydrodipicolinate + L-glutamate + H2O + H(+). The protein operates within amino-acid biosynthesis; L-lysine biosynthesis via DAP pathway; LL-2,6-diaminopimelate from (S)-tetrahydrodipicolinate (aminotransferase route): step 1/1. In terms of biological role, involved in the synthesis of meso-diaminopimelate (m-DAP or DL-DAP), required for both lysine and peptidoglycan biosynthesis. Catalyzes the direct conversion of tetrahydrodipicolinate to LL-diaminopimelate. The sequence is that of LL-diaminopimelate aminotransferase from Phocaeicola vulgatus (strain ATCC 8482 / DSM 1447 / JCM 5826 / CCUG 4940 / NBRC 14291 / NCTC 11154) (Bacteroides vulgatus).